A 93-amino-acid polypeptide reads, in one-letter code: Phosphoribosyl-ATP pyrophosphatase (93 aa).

It belongs to the PRA-PH family.

It is found in the cytoplasm. It catalyses the reaction 1-(5-phospho-beta-D-ribosyl)-ATP + H2O = 1-(5-phospho-beta-D-ribosyl)-5'-AMP + diphosphate + H(+). It functions in the pathway amino-acid biosynthesis; L-histidine biosynthesis; L-histidine from 5-phospho-alpha-D-ribose 1-diphosphate: step 2/9. The chain is Phosphoribosyl-ATP pyrophosphatase from Mycobacterium leprae (strain Br4923).